The sequence spans 601 residues: MEFKVIAEYFDKLEKISSRLQLTALLADLLSKSDKTIIDKVVYIIQGKLWPDFLGYPELGIGEKFLIKAISIATNTDENSVENLYKTIGDLGEVARRLKSKQQSTGILGFLGTTSKESLTVDEVYSTLSKVALTTGEGSRDLKIRLLAGLLKKADPLEAKFLVRFVEGRLRVGIGDATVLDAMAIAFGGGQSASEIIERAYNLRADLGNIAKIIVEKGIEALKTLKPQVGIPIRPMLAERLSNPEEILKKMGGNAIVDYKYDGERAQIHKKEDKIFIFSRRLENITSQYPDVVDYVSKYIEGKEFIIEGEIVAIDPESGEMRPFQELMHRKRKSDIYEAIKEYPVNVFLFDLMYYEDVDYTTKPLEARRKLLESIVKPNDYVKIAHHIQANNVEDLKSFFYRAISEGGEGVMVKAIGKDAIYQAGARGWLWIKLKRDYQSEMADTVDLVVVGGFYGKGKRGGKISSLLMAAYNPKTDSFESVCKVASGFSDEQLDELQKKLMEIKRDVKHPRVNSKMEPDIWVEPVYVAEIIGSEITISPLHTCCQDVVEKDAGLSIRFPRFIRWRDDKSPEDATTTDEILEMYNKQPKKKIESPAVDESV.

Asp-258 contacts ATP. The N6-AMP-lysine intermediate role is filled by Lys-260. ATP is bound by residues Arg-265, Arg-280, Glu-310, Phe-350, Arg-427, and Lys-433.

It belongs to the ATP-dependent DNA ligase family. Interacts with the PCNA heterotrimer, probably via subunit PCNA3. A divalent metal cation serves as cofactor.

It catalyses the reaction ATP + (deoxyribonucleotide)n-3'-hydroxyl + 5'-phospho-(deoxyribonucleotide)m = (deoxyribonucleotide)n+m + AMP + diphosphate.. Its activity is regulated as follows. Ligase activity stimulated by PCNA heterotrimer. Functionally, DNA ligase that seals nicks in double-stranded DNA during DNA replication, DNA recombination and DNA repair. Interaction with PCNA enhances ligase activity. DNA polymerase I, DNA ligase and the flap endonuclease may be constitutively associated with the PCNA heterotrimer forming a scanning complex able to couple DNA synthesis and Okazaki fragment maturation. This is DNA ligase from Saccharolobus solfataricus (strain ATCC 35092 / DSM 1617 / JCM 11322 / P2) (Sulfolobus solfataricus).